The following is a 58-amino-acid chain: MKQSEFRRWLKAQGAEFKDGTNHLKVFLNGKQTTMPRHPSKEIPEPLRKLILKQPGIK.

The protein belongs to the HicA mRNA interferase family. Probably forms a complex with the cognate antitoxin HicB 2 which inhibits the mRNA interferase activity.

Toxic component of a type II toxin-antitoxin (TA) system. A probable translation-independent mRNA interferase. In Photorhabdus laumondii subsp. laumondii (strain DSM 15139 / CIP 105565 / TT01) (Photorhabdus luminescens subsp. laumondii), this protein is Probable mRNA interferase HicA 2 (hicA2).